The primary structure comprises 519 residues: DNA damage-binding protein CMR1 (519 aa).

Positions 35–92 (AEAGLGPTGKSRAAASSKPRVKKPAPKKIKQEDIAPRRTSSRLKGIEADSEKAKRKAE) are disordered. Basic residues predominate over residues 53-62 (PRVKKPAPKK). Over residues 78–92 (KGIEADSEKAKRKAE) the composition is skewed to basic and acidic residues. WD repeat units lie at residues 240–280 (PHTR…AVEV), 287–327 (NEDQ…DQAE), 331–371 (LSEK…GKGD), 380–420 (EHES…EWAT), 442–485 (GRWV…LAQL), and 488–519 (DGIT…CLWM).

This sequence belongs to the WD repeat DDB2/WDR76 family.

DNA-binding protein that binds to both single- and double-stranded DNA. Binds preferentially to UV-damaged DNA. May be involved in DNA-metabolic processes. This chain is DNA damage-binding protein CMR1, found in Phaeosphaeria nodorum (strain SN15 / ATCC MYA-4574 / FGSC 10173) (Glume blotch fungus).